Reading from the N-terminus, the 153-residue chain is MTPEVVIYTDGACSGNPGPGGWGAILIHGEREKELCGGEAATTNNRMELMAAIQALEALKRPCRVELHTDSQYVQKGIHEWIHGWKKRGWLTADKKPVKNDDLWKRLDAARLRHHVDWRWVKGHAGHELNERADALARKGLSEAAAARAAGGA.

The 142-residue stretch at 1–142 folds into the RNase H type-1 domain; the sequence is MTPEVVIYTD…ADALARKGLS (142 aa). The Mg(2+) site is built by aspartate 10, glutamate 48, aspartate 70, and aspartate 134.

The protein belongs to the RNase H family. In terms of assembly, monomer. Requires Mg(2+) as cofactor.

It localises to the cytoplasm. The enzyme catalyses Endonucleolytic cleavage to 5'-phosphomonoester.. Functionally, endonuclease that specifically degrades the RNA of RNA-DNA hybrids. The polypeptide is Ribonuclease H (Phenylobacterium zucineum (strain HLK1)).